The sequence spans 250 residues: Cytochrome c oxidase subunit 2 (250 aa).

Over 1–27 (MGLLFNNLIMNFDAPSPWGIYFQDSAT) the chain is Mitochondrial intermembrane. The helical transmembrane segment at 28–61 (PQMEGLVELHDNIMYYLVVILFGVGWILLSIIRN) threads the bilayer. Over 62–77 (YISTKSPISHKYLNHG) the chain is Mitochondrial matrix. A helical transmembrane segment spans residues 78–107 (TLIELIWTITPAVILILIAFPSFKLLYLMD). The Mitochondrial intermembrane portion of the chain corresponds to 108-250 (EVSDPSMSVL…EKFLTWLEEQ (143 aa)). Cu cation-binding residues include histidine 185, cysteine 220, glutamate 222, cysteine 224, histidine 228, and methionine 231. Glutamate 222 contributes to the Mg(2+) binding site.

The protein belongs to the cytochrome c oxidase subunit 2 family. Component of the cytochrome c oxidase (complex IV, CIV), a multisubunit enzyme composed of 11 subunits. The complex is composed of a catalytic core of 3 subunits Cox1, Cox2 and Cox3, encoded in the mitochondrial DNA, and 8 supernumerary subunits Cox4, Cox5a/Cox5, Cox6, Cox7, Cox8, Cox7a/Cox9, Cox6b/Cox12 and Cox6a/Cox13, which are encoded in the nuclear genome. The complex exists as a monomer or a dimer and forms respiratory supercomplexes (SCs) in the inner mitochondrial membrane with NADH-ubiquinone oxidoreductase (complex I, CI) and ubiquinol-cytochrome c oxidoreductase (cytochrome b-c1 complex, complex III, CIII), resulting in various different assemblies (supercomplexes I(1)IV(1), I(1)III(3)IV(2), III(2)IV(1) and III(2)IV(2) as well as larger supercomplexes of compositions like I(1)III(2)IV(5-6)). Requires Cu cation as cofactor.

It is found in the mitochondrion inner membrane. It catalyses the reaction 4 Fe(II)-[cytochrome c] + O2 + 8 H(+)(in) = 4 Fe(III)-[cytochrome c] + 2 H2O + 4 H(+)(out). Its function is as follows. Component of the cytochrome c oxidase, the last enzyme in the mitochondrial electron transport chain which drives oxidative phosphorylation. The respiratory chain contains 3 multisubunit complexes succinate dehydrogenase (complex II, CII), ubiquinol-cytochrome c oxidoreductase (cytochrome b-c1 complex, complex III, CIII) and cytochrome c oxidase (complex IV, CIV), that cooperate to transfer electrons derived from NADH and succinate to molecular oxygen, creating an electrochemical gradient over the inner membrane that drives transmembrane transport and the ATP synthase. Cytochrome c oxidase is the component of the respiratory chain that catalyzes the reduction of oxygen to water. Electrons originating from reduced cytochrome c in the intermembrane space (IMS) are transferred via the dinuclear copper A center (CU(A)) of Cox2 and heme A of Cox1 to the active site in Cox1, a binuclear center (BNC) formed by heme A3 and copper B (CU(B)). The BNC reduces molecular oxygen to 2 water molecules using 4 electrons from cytochrome c in the IMS and 4 protons from the mitochondrial matrix. This is Cytochrome c oxidase subunit 2 (cox-2) from Neurospora crassa (strain ATCC 24698 / 74-OR23-1A / CBS 708.71 / DSM 1257 / FGSC 987).